The following is a 283-amino-acid chain: Pantothenate synthetase (283 aa).

Residue 30–37 (MGNLHDGH) participates in ATP binding. The active-site Proton donor is histidine 37. A (R)-pantoate-binding site is contributed by glutamine 61. A beta-alanine-binding site is contributed by glutamine 61. 149-152 (GEKD) is a binding site for ATP. Glutamine 155 provides a ligand contact to (R)-pantoate. 186 to 189 (LSSR) provides a ligand contact to ATP.

The protein belongs to the pantothenate synthetase family. As to quaternary structure, homodimer.

It is found in the cytoplasm. It catalyses the reaction (R)-pantoate + beta-alanine + ATP = (R)-pantothenate + AMP + diphosphate + H(+). Its pathway is cofactor biosynthesis; (R)-pantothenate biosynthesis; (R)-pantothenate from (R)-pantoate and beta-alanine: step 1/1. Catalyzes the condensation of pantoate with beta-alanine in an ATP-dependent reaction via a pantoyl-adenylate intermediate. This chain is Pantothenate synthetase, found in Escherichia coli O45:K1 (strain S88 / ExPEC).